We begin with the raw amino-acid sequence, 224 residues long: ATP phosphoribosyltransferase (224 aa).

This sequence belongs to the ATP phosphoribosyltransferase family. Short subfamily. As to quaternary structure, heteromultimer composed of HisG and HisZ subunits.

It is found in the cytoplasm. The catalysed reaction is 1-(5-phospho-beta-D-ribosyl)-ATP + diphosphate = 5-phospho-alpha-D-ribose 1-diphosphate + ATP. Its pathway is amino-acid biosynthesis; L-histidine biosynthesis; L-histidine from 5-phospho-alpha-D-ribose 1-diphosphate: step 1/9. Its function is as follows. Catalyzes the condensation of ATP and 5-phosphoribose 1-diphosphate to form N'-(5'-phosphoribosyl)-ATP (PR-ATP). Has a crucial role in the pathway because the rate of histidine biosynthesis seems to be controlled primarily by regulation of HisG enzymatic activity. The protein is ATP phosphoribosyltransferase of Cupriavidus necator (strain ATCC 17699 / DSM 428 / KCTC 22496 / NCIMB 10442 / H16 / Stanier 337) (Ralstonia eutropha).